A 281-amino-acid polypeptide reads, in one-letter code: 4-deoxy-L-threo-5-hexosulose-uronate ketol-isomerase (281 aa).

Histidine 198, histidine 200, glutamate 205, and histidine 248 together coordinate Zn(2+).

Belongs to the KduI family. Zn(2+) is required as a cofactor.

The catalysed reaction is 5-dehydro-4-deoxy-D-glucuronate = 3-deoxy-D-glycero-2,5-hexodiulosonate. It participates in glycan metabolism; pectin degradation; 2-dehydro-3-deoxy-D-gluconate from pectin: step 4/5. Catalyzes the isomerization of 5-dehydro-4-deoxy-D-glucuronate to 3-deoxy-D-glycero-2,5-hexodiulosonate. This is 4-deoxy-L-threo-5-hexosulose-uronate ketol-isomerase from Levilactobacillus brevis (strain ATCC 367 / BCRC 12310 / CIP 105137 / JCM 1170 / LMG 11437 / NCIMB 947 / NCTC 947) (Lactobacillus brevis).